A 497-amino-acid chain; its full sequence is Di-/tripeptide transporter (497 aa).

Topologically, residues 1-36 (MQNLNKTEKTFFGQPRGLLTLFQTEFWERFSYYGMR) are cytoplasmic. Residues 37 to 55 (AILVYYLYALTTADNAGLG) form a helical membrane-spanning segment. Residues 56–64 (LPKAQAMAI) are Extracellular-facing. A helical transmembrane segment spans residues 65–83 (VSIYGALVYLSTIVGGWVA). Residues 84–92 (DRLLGASRT) are Cytoplasmic-facing. The helical transmembrane segment at 93-111 (IFLGGILITLGHVALATPF) threads the bilayer. Residues 112 to 115 (GLSS) are Extracellular-facing. The helical transmembrane segment at 116 to 134 (LFVALFLIILGTGMLKPNI) threads the bilayer. Residues 135 to 154 (SNMVGHLYSKDDSRRDTGFN) are Cytoplasmic-facing. A helical transmembrane segment spans residues 155-173 (IFVVGINMGSLIAPLIVGT). Over 174–181 (VGQGVNYH) the chain is Extracellular. Residues 182–200 (LGFSLAAIGMIFALFAYWY) form a helical membrane-spanning segment. Residues 201 to 224 (GRLRHFPEIGREPSNPMDAKAKRN) are Cytoplasmic-facing. Residues 225-243 (FIITLTIVLIVALIGFFLI) traverse the membrane as a helical segment. At 244 to 254 (YQASPANFINN) the chain is on the extracellular side. A helical membrane pass occupies residues 255 to 273 (FINVLSIIGIVVPIIYFVM). At 274–293 (MFTSKKVESDERRKLTAYIP) the chain is on the cytoplasmic side. The chain crosses the membrane as a helical span at residues 294-312 (LFLSAIVFWAIEEQSSTII). Topologically, residues 313 to 335 (AVWGESRSNLNPTWFGFTFHIDP) are extracellular. The chain crosses the membrane as a helical span at residues 336 to 354 (SWYQLLNPLFIVLLSPIFV). The Cytoplasmic segment spans residues 355–372 (RIWNKLGDRQPSTIVKFG). Residues 373–391 (LGLMLTGASYLIMTLPGLL) form a helical membrane-spanning segment. Residues 392–425 (NGTSGRASALWLVLMFAVQMAGELLVSPVGLSVS) are Extracellular-facing. Residues 426-444 (TKLAPVAFQSQMMAMWFLA) traverse the membrane as a helical segment. Residues 445-497 (DSTSQAINAQITPIFKAATEVHFFAITGIIGIIVGIILLIIKKPILKLMGDVR) are Cytoplasmic-facing.

The protein belongs to the major facilitator superfamily. Proton-dependent oligopeptide transporter (POT/PTR) (TC 2.A.17) family.

The protein localises to the cell membrane. Its function is as follows. Proton-dependent uptake of di- or tri-peptides. The sequence is that of Di-/tripeptide transporter (dtpT) from Lactococcus lactis subsp. cremoris (Streptococcus cremoris).